The chain runs to 180 residues: UPF0340 protein BLi03936/BL03990 (180 aa).

Belongs to the UPF0340 family.

This chain is UPF0340 protein BLi03936/BL03990, found in Bacillus licheniformis (strain ATCC 14580 / DSM 13 / JCM 2505 / CCUG 7422 / NBRC 12200 / NCIMB 9375 / NCTC 10341 / NRRL NRS-1264 / Gibson 46).